We begin with the raw amino-acid sequence, 59 residues long: uncharacterized protein (59 aa).

Residues 6–26 (WWLVVFAVFVFLFDTLLMQWI) form a helical membrane-spanning segment.

It is found in the membrane. This is an uncharacterized protein from Escherichia coli O157:H7.